The chain runs to 297 residues: Lysenin (297 aa).

The N-terminal cap domain stretch occupies residues E10–S33. The interval V34 to I107 is beta-hairpin domain. Residues P108–I156 are N-terminal cap domain. Residues V157–G297 form a C-terminal receptor-binding domain region. Residues K185, S227, Y233, and Y282 each contribute to the an N-(acyl)-sphingosylphosphocholine site. C272 and C283 are oxidised to a cystine.

It belongs to the lysenin family. In terms of assembly, binds to sphingomyelin as a monomer by using its C-terminal domain. Forms a nonamer when sphingomyelin/lysenin ratio is lower than ca 500. Oligomerization, but not binding, is influenced by the fluidity of sphingomyelin. In terms of tissue distribution, expressed by coelomocytes.

Its subcellular location is the secreted. The protein resides in the target cell membrane. Pore-forming toxin that defensively acts against parasitic microorganisms by forming pores in sphingomyelin-containing membranes. Has hemolytic activity and is also cytotoxic to spermatozoa of some species of invertebrates and many species of vertebrates and to amphibian larvae, guinea pig polymorphonuclear leukocytes, chicken fibroblasts, normal spleen cells and various tumor cells. Is lethal for various species of reptiles, amphibian, birds and mammals. Induces smooth muscle contraction. It binds sphingomyelin and induces hemolysis in the same manner as lysenin-related protein 2, and is 10-fold more effective than lysenin-related protein 1. This chain is Lysenin, found in Eisenia fetida (Red wiggler worm).